The following is a 78-amino-acid chain: MKFRLVKLTAISSYSNENISFAVEYKKYFFSKWKQYYKTNWVCIDRPYSWKSDLEKCQKLLSTLKERGTTHIKTVIGK.

This is an uncharacterized protein from Escherichia coli (Bacteriophage T4).